Consider the following 398-residue polypeptide: Putative F-box protein At4g17780 (398 aa).

The F-box domain maps to 8–55; sequence PSSIYIVADLLEDIFLRLPLKSILISKSVSKRWRSILESKTFVERRMS.

This is Putative F-box protein At4g17780 from Arabidopsis thaliana (Mouse-ear cress).